The sequence spans 207 residues: Serotonin N-acetyltransferase (207 aa).

Positions 1–29 are disordered; that stretch reads MSTPSVHCLKPSPLHLPSGIPGSPGRQRR. Residues 28 to 35 form a YWHAZ-binding region; the sequence is RRHTLPAN. Residue Thr31 is modified to Phosphothreonine; by PKA. Residues 35-196 enclose the N-acetyltransferase domain; that stretch reads NEFRCLTPED…TFTEMHCSLR (162 aa). Leu124 lines the substrate pocket. Acetyl-CoA contacts are provided by residues 124–126 and 132–137; these read LAV and QQGKGS. Met159 is a binding site for substrate. 168 to 170 serves as a coordination point for acetyl-CoA; it reads YQR. Ser205 carries the phosphoserine; by PKA modification.

This sequence belongs to the acetyltransferase family. AANAT subfamily. In terms of assembly, monomer. Interacts with several 14-3-3 proteins, including YWHAB, YWHAE, YWHAG and YWHAZ, preferentially when phosphorylated at Thr-31. Phosphorylation on Ser-205 also allows binding to YWHAZ, but with a 10-fold lower affinity. The interaction with YWHAZ considerably increases affinity for arylalkylamines and acetyl-CoA and protects the enzyme from dephosphorylation and proteasomal degradation. It may also prevent thiol-dependent inactivation. The physiological stoichiometry of the interaction is not clear. In vitro studies show either 1:2 (i.e. 1 AANAT molecule per YWHAZ dimer) or 2:2. CAMP-dependent phosphorylation on both N-terminal Thr-31 and C-terminal Ser-205 regulates AANAT activity by promoting interaction with 14-3-3 proteins. As to expression, highest expression in the pineal gland, followed by retina. Expressed at much lower levels in brainstem and pituitary gland. AANAT activity also detected at low levels in the olfactory lobe.

The protein resides in the cytoplasm. The enzyme catalyses a 2-arylethylamine + acetyl-CoA = an N-acetyl-2-arylethylamine + CoA + H(+). The protein operates within aromatic compound metabolism; melatonin biosynthesis; melatonin from serotonin: step 1/2. In terms of biological role, controls the night/day rhythm of melatonin production in the pineal gland. Catalyzes the N-acetylation of serotonin into N-acetylserotonin, the penultimate step in the synthesis of melatonin. The sequence is that of Serotonin N-acetyltransferase (AANAT) from Ovis aries (Sheep).